Here is a 37-residue protein sequence, read N- to C-terminus: Large ribosomal subunit protein bL36B (37 aa).

It belongs to the bacterial ribosomal protein bL36 family.

This chain is Large ribosomal subunit protein bL36B, found in Saccharopolyspora erythraea (strain ATCC 11635 / DSM 40517 / JCM 4748 / NBRC 13426 / NCIMB 8594 / NRRL 2338).